Consider the following 496-residue polypeptide: Probable diguanylate cyclase DgcJ (496 aa).

A run of 2 helical transmembrane segments spans residues F11–S31 and I305–I325. In terms of domain architecture, GGDEF spans S374–S496. D382 provides a ligand contact to Mg(2+). Substrate is bound by residues N390, H395, and D399. D425 is a binding site for Mg(2+). D425 serves as the catalytic Proton acceptor.

In terms of assembly, homodimer. It depends on Mg(2+) as a cofactor.

The protein localises to the cell inner membrane. It catalyses the reaction 2 GTP = 3',3'-c-di-GMP + 2 diphosphate. The protein operates within purine metabolism; 3',5'-cyclic di-GMP biosynthesis. In terms of biological role, catalyzes the synthesis of cyclic-di-GMP (c-di-GMP) via the condensation of 2 GTP molecules. In Escherichia coli (strain K12), this protein is Probable diguanylate cyclase DgcJ.